A 571-amino-acid polypeptide reads, in one-letter code: MRTSQYLFSTLKETPNDAQVVSHQLMLRAGMIRPMASGLYNWLPTGIKVLKKVENIIREEMNKGGAIEVLMPVVQPAELWQESGRWNDYGAELLRFVDRGSRDFVLGPTHEEVITDLVRREVSSYKQLPLNLYQIQTKFRDEVRPRFGVMRSREFVMKDAYSFHVDKASLQETYDVMYQVYSNIFTRLGLDFRAVQADTGSIGGSASHEFQVLASSGEDDVVFSTESDFAANIELAEAVAVGERQAPTAEMQLVDTPNAKTINELVEQFNLPIGKTVKTLIVKGATEEQPLVALVLRGDHELNEIKAQKHPLVADPLEFADEAEIKAKIGAGVGSLGVINLNVPAIIDRSVAVMSDFGCGANIDGKHYFNVNWERDAAMPEVADLRNVVEGDPSPDGKGVLQIKRGIEVGHIFQLGTKYSEAMKATVQGEDGKPLVMTMGCYGIGVTRVVAAAIEQHHDERGIIWPSDEIAPFTVAIVPMNMHKSESVQQFSEELYRTLKAQGVDVIFDDRKERPGVMFADMELIGVPHMVVIGEKNLANGEIEYKNRRTGEKQMIAKDQLLAFLKENVKA.

Belongs to the class-II aminoacyl-tRNA synthetase family. ProS type 1 subfamily. Homodimer.

It is found in the cytoplasm. The catalysed reaction is tRNA(Pro) + L-proline + ATP = L-prolyl-tRNA(Pro) + AMP + diphosphate. Functionally, catalyzes the attachment of proline to tRNA(Pro) in a two-step reaction: proline is first activated by ATP to form Pro-AMP and then transferred to the acceptor end of tRNA(Pro). As ProRS can inadvertently accommodate and process non-cognate amino acids such as alanine and cysteine, to avoid such errors it has two additional distinct editing activities against alanine. One activity is designated as 'pretransfer' editing and involves the tRNA(Pro)-independent hydrolysis of activated Ala-AMP. The other activity is designated 'posttransfer' editing and involves deacylation of mischarged Ala-tRNA(Pro). The misacylated Cys-tRNA(Pro) is not edited by ProRS. The polypeptide is Proline--tRNA ligase (Actinobacillus pleuropneumoniae serotype 5b (strain L20)).